Consider the following 175-residue polypeptide: Gamma-crystallin B (175 aa).

Beta/gamma crystallin 'Greek key' domains lie at 2 to 40 (GKITFYEDRGFQGHCYECSSDCPNLQPYFSRCNSIRVDS) and 41 to 83 (GCWM…RLIP). The N-linked (Glc) (glycation) lysine; in vitro glycan is linked to K3. C19 and C23 are oxidised to a cystine. A connecting peptide region spans residues 84 to 88 (QHTGT). Beta/gamma crystallin 'Greek key' domains are found at residues 89–129 (FRMR…NVLE) and 130–172 (GSWV…RRVM).

This sequence belongs to the beta/gamma-crystallin family.

Its function is as follows. Crystallins are the dominant structural components of the vertebrate eye lens. The chain is Gamma-crystallin B (CRYGB) from Bos taurus (Bovine).